Consider the following 197-residue polypeptide: Recombination protein RecR (197 aa).

The C4-type zinc finger occupies 56-71; sequence CQRCHSFSDEAVCPLC. The Toprim domain occupies 79–174; that stretch reads TLLCVVETAA…KVTRLAQGVP (96 aa).

Belongs to the RecR family.

Functionally, may play a role in DNA repair. It seems to be involved in an RecBC-independent recombinational process of DNA repair. It may act with RecF and RecO. This is Recombination protein RecR from Psychrobacter cryohalolentis (strain ATCC BAA-1226 / DSM 17306 / VKM B-2378 / K5).